The sequence spans 95 residues: Mitochondrial import inner membrane translocase subunit Tim13 (95 aa).

M1 carries the N-acetylmethionine modification. S7 is subject to Phosphoserine. Residues 46–69 (CFRKCIGKPGGSLDNSEQKCIAMC) carry the Twin CX3C motif motif. 2 disulfide bridges follow: C46–C69 and C50–C65. K53 carries the post-translational modification N6-succinyllysine.

Belongs to the small Tim family. Heterohexamer; composed of 3 copies of TIMM8 (TIMM8A or TIMM8B) and 3 copies of TIMM13, named soluble 70 kDa complex. Associates with the TIM22 complex, whose core is composed of TIMM22. As to expression, ubiquitous, with highest expression in heart, kidney, liver and skeletal muscle.

The protein localises to the mitochondrion inner membrane. Mitochondrial intermembrane chaperone that participates in the import and insertion of some multi-pass transmembrane proteins into the mitochondrial inner membrane. Also required for the transfer of beta-barrel precursors from the TOM complex to the sorting and assembly machinery (SAM complex) of the outer membrane. Acts as a chaperone-like protein that protects the hydrophobic precursors from aggregation and guide them through the mitochondrial intermembrane space. The TIMM8-TIMM13 complex mediates the import of proteins such as TIMM23, SLC25A12/ARALAR1 and SLC25A13/ARALAR2, while the predominant TIMM9-TIMM10 70 kDa complex mediates the import of much more proteins. The chain is Mitochondrial import inner membrane translocase subunit Tim13 (TIMM13) from Homo sapiens (Human).